The following is a 275-amino-acid chain: MSLFLKDDSIQIREVWNDNLESEMALIREVVDDFPFVAMDTEFPGIVCRPVGTFKTNTEYHYETLKTNVNILKMIQLGLTFSDEKGNLPTCGTDNKYCIWQFNFREFDLESDIYATDSIELLRQSGIDFVKNNEFGIDSKRFAELLMSSGIVLNENVHWVTFHSGYDFGYLLKLLTCQNLPETQTGFFEMISVYFPRVYDIKHLMKFCNSLHGGLNKLAELLDVERVGICHQAGSDSLLTSCTFRKLQENFFIGSMEKYSGVLYGLGVENGQIVH.

Residues D40, E42, D167, and D236 each coordinate a divalent metal cation.

This sequence belongs to the CAF1 family. As to quaternary structure, component of the CCR4-NOT complex, at least composed of CRR4 and CAF1 proteins. Requires a divalent metal cation as cofactor.

Its subcellular location is the nucleus. It localises to the cytoplasm. The catalysed reaction is Exonucleolytic cleavage of poly(A) to 5'-AMP.. Its function is as follows. Ubiquitous transcription factor required for a diverse set of processes. It is a component of the CCR4 complex involved in the control of gene expression. The polypeptide is Probable CCR4-associated factor 1 homolog 7 (CAF1-7) (Arabidopsis thaliana (Mouse-ear cress)).